Here is a 213-residue protein sequence, read N- to C-terminus: Kynurenine formamidase (213 aa).

Residue W18 participates in substrate binding. Residues H48, H52, and D54 each coordinate Zn(2+). H58 acts as the Proton donor/acceptor in catalysis. Zn(2+) is bound by residues H160 and E172.

It belongs to the Cyclase 1 superfamily. KynB family. In terms of assembly, homodimer. Zn(2+) is required as a cofactor.

The catalysed reaction is N-formyl-L-kynurenine + H2O = L-kynurenine + formate + H(+). It functions in the pathway amino-acid degradation; L-tryptophan degradation via kynurenine pathway; L-kynurenine from L-tryptophan: step 2/2. Its function is as follows. Catalyzes the hydrolysis of N-formyl-L-kynurenine to L-kynurenine, the second step in the kynurenine pathway of tryptophan degradation. The chain is Kynurenine formamidase from Burkholderia lata (strain ATCC 17760 / DSM 23089 / LMG 22485 / NCIMB 9086 / R18194 / 383).